A 307-amino-acid chain; its full sequence is MDRCCQRATAFACALRPTKLIDYEEMFRGAMQARAMVANPDQWADSDRDQVNTRHYLSTSMRVALDRGEFFLVYQPIIRLADNRIIGAEALLRWEHPTLGTLLPGRFIDRAENNGLMVPLTAFVLEQACRHVRSWRDHSTDPQPFVSVNVSASTICDPGFLVLVEGVLGETGLPAHALQLELAEDARLSRDEKAVTRLQELSALGVGIAIDDFGIGFSSLAYLPRLPVDVVKLGGKFIECLDGDIQARLANEQITRAMIDLGDKLGITVTAKLVETPSQAARLRAFGCKAAQGWHFAKALPVDFFRE.

Positions 54-307 (RHYLSTSMRV…KALPVDFFRE (254 aa)) constitute an EAL domain. The next 2 membrane-spanning stretches (helical) occupy residues 158–178 (PGFL…AHAL) and 203–223 (ALGV…LAYL).

The protein resides in the cell membrane. This is an uncharacterized protein from Mycobacterium tuberculosis (strain CDC 1551 / Oshkosh).